A 456-amino-acid chain; its full sequence is Phosphoglucomutase/phosphomannomutase (456 aa).

Serine 101 acts as the Phosphoserine intermediate in catalysis. Serine 101, aspartate 243, aspartate 245, and aspartate 247 together coordinate Mg(2+). Serine 101 carries the phosphoserine; by autocatalysis modification.

This sequence belongs to the phosphohexose mutase family. In terms of assembly, homotetramer. Requires Mg(2+) as cofactor. In terms of processing, activated by phosphorylation.

The catalysed reaction is alpha-D-glucose 1-phosphate = alpha-D-glucose 6-phosphate. It carries out the reaction alpha-D-mannose 1-phosphate = D-mannose 6-phosphate. Its function is as follows. Catalyzes the interconversion of glucose 1-phosphate and glucose 6-phosphate, and the interconversion of mannose 1-phosphate and mannose 6-phosphate. Also displays low activity with deoxyribose 1-phosphate and glucosamine 1-phosphate. The protein is Phosphoglucomutase/phosphomannomutase of Thermococcus kodakarensis (strain ATCC BAA-918 / JCM 12380 / KOD1) (Pyrococcus kodakaraensis (strain KOD1)).